We begin with the raw amino-acid sequence, 250 residues long: uncharacterized protein (250 aa).

This is an uncharacterized protein from Bacillus subtilis (strain 168).